Reading from the N-terminus, the 540-residue chain is Maintenance of mitochondrial morphology protein 1 (540 aa).

The Lumenal portion of the chain corresponds to 1–25 (MAGPSNQTQPPPPVLTQPSLSFTQG). The chain crosses the membrane as a helical span at residues 26-46 (LLVGQLSVVLLIGAFIKFFIF). The Cytoplasmic portion of the chain corresponds to 47–540 (GEAPPHPSRN…GSMPDPVVVT (494 aa)). Disordered regions lie at residues 52 to 135 (HPSR…SHQP), 275 to 331 (GPGT…ATAA), 416 to 471 (GRTG…GGSM), and 509 to 540 (YGGA…VVVT). Polar residues-rich tracts occupy residues 69–81 (YSLN…SSPR), 88–105 (STSN…NTRS), and 112–121 (YSATPTNPTS). Residues 122–132 (KHSRSRPHHSS) show a composition bias toward basic residues. The region spanning 134 to 409 (QPESLDWFNV…EPRVQVVGLP (276 aa)) is the SMP-LTD domain. The segment covering 321 to 331 (TNTNTAGATAA) has biased composition (low complexity). Composition is skewed to gly residues over residues 442-471 (TAGG…GGSM) and 511-521 (GAQGGGGGGGR).

This sequence belongs to the MMM1 family. Homodimer. Component of the ER-mitochondria encounter structure (ERMES) or MDM complex, composed of MMM1, MDM10, MDM12 and MDM34. An MMM1 homodimer associates with one molecule of MDM12 on each side in a pairwise head-to-tail manner, and the SMP-LTD domains of MMM1 and MDM12 generate a continuous hydrophobic tunnel for phospholipid trafficking.

It localises to the endoplasmic reticulum membrane. Component of the ERMES/MDM complex, which serves as a molecular tether to connect the endoplasmic reticulum (ER) and mitochondria. Components of this complex are involved in the control of mitochondrial shape and protein biogenesis, and function in nonvesicular lipid trafficking between the ER and mitochondria. The MDM12-MMM1 subcomplex functions in the major beta-barrel assembly pathway that is responsible for biogenesis of all outer membrane beta-barrel proteins, and acts in a late step after the SAM complex. The MDM10-MDM12-MMM1 subcomplex further acts in the TOM40-specific pathway after the action of the MDM12-MMM1 complex. Essential for establishing and maintaining the structure of mitochondria and maintenance of mtDNA nucleoids. This Blastomyces gilchristii (strain SLH14081) (Blastomyces dermatitidis) protein is Maintenance of mitochondrial morphology protein 1.